A 406-amino-acid chain; its full sequence is Enoyl-[acyl-carrier-protein] reductase [NADH] (406 aa).

Residues 48–53 (GASTGF), 74–75 (FE), 111–112 (DA), and 140–141 (IA) contribute to the NAD(+) site. Tyr226 is a binding site for substrate. The Proton donor role is filled by Tyr236. NAD(+) is bound by residues Lys245 and 275–277 (LVT).

Belongs to the TER reductase family. In terms of assembly, monomer.

It carries out the reaction a 2,3-saturated acyl-[ACP] + NAD(+) = a (2E)-enoyl-[ACP] + NADH + H(+). Its pathway is lipid metabolism; fatty acid biosynthesis. In terms of biological role, involved in the final reduction of the elongation cycle of fatty acid synthesis (FAS II). Catalyzes the reduction of a carbon-carbon double bond in an enoyl moiety that is covalently linked to an acyl carrier protein (ACP). This is Enoyl-[acyl-carrier-protein] reductase [NADH] from Coxiella burnetii (strain CbuK_Q154) (Coxiella burnetii (strain Q154)).